Consider the following 85-residue polypeptide: Homeobox protein knotted-1-like 8 (85 aa).

In terms of domain architecture, ELK spans 1–21 (ELKHQLLRKYGGYLGGLRQEF). A DNA-binding region (homeobox; TALE-type) is located at residues 22 to 85 (SKRKKKGKLP…NQRKRHWKPA (64 aa)).

It belongs to the TALE/KNOX homeobox family. As to expression, strongly expressed in ear inflorescence primordia and shoot meristem. Weakly expressed in embryos. Absent from leaves.

The protein localises to the nucleus. Functionally, probably binds to the DNA sequence 5'-TGAC-3'. This Zea mays (Maize) protein is Homeobox protein knotted-1-like 8 (KNOX8).